The chain runs to 523 residues: NADH-ubiquinone oxidoreductase chain 2 (523 aa).

Transmembrane regions (helical) follow at residues 3 to 23, 30 to 50, 62 to 82, 110 to 130, 135 to 155, 170 to 190, 212 to 232, 246 to 266, 281 to 301, 306 to 326, 333 to 353, 386 to 406, 419 to 439, and 490 to 510; these read LFGVLTMILAIALFSLRIPAI, IILLLFSALLSYNSLYMNNIG, VTTITQSIDVFIYLLGALVLL, SVLAEYPLIALFSVLGMSSLI, LISMFLSIELQSFAVYILATI, FLLGSLSSALILLGSSLLYSF, IEISVLLIMVGLLFKVSAAPF, VVTTWLTTMPKIAFLVFILEF, LLLISSLLSLLIGTIGGLAQY, LLTYSTISHVGFLLLALAINN, FLFYLIQYSLTNINVFFILVA, GLSLAICLFSMAGIPPLVGFF, GNFFLAFVAILVSVVSAAYYL, and LVIATITLLLIFFIINPTPLL.

Belongs to the complex I subunit 2 family.

Its subcellular location is the mitochondrion inner membrane. It carries out the reaction a ubiquinone + NADH + 5 H(+)(in) = a ubiquinol + NAD(+) + 4 H(+)(out). Core subunit of the mitochondrial membrane respiratory chain NADH dehydrogenase (Complex I) that is believed to belong to the minimal assembly required for catalysis. Complex I functions in the transfer of electrons from NADH to the respiratory chain. The immediate electron acceptor for the enzyme is believed to be ubiquinone. This Rhizopus oryzae (Mucormycosis agent) protein is NADH-ubiquinone oxidoreductase chain 2.